Reading from the N-terminus, the 334-residue chain is L-lactate dehydrogenase B-A chain (334 aa).

Residues Gly-30–Arg-58 and Arg-100 contribute to the NAD(+) site. The substrate site is built by Arg-107, Asn-139, and Arg-170. NAD(+) is bound at residue Asn-139. Residue His-194 is the Proton acceptor of the active site. Thr-249 is a binding site for substrate.

It belongs to the LDH/MDH superfamily. LDH family. As to quaternary structure, homotetramer.

The protein localises to the cytoplasm. The enzyme catalyses (S)-lactate + NAD(+) = pyruvate + NADH + H(+). It functions in the pathway fermentation; pyruvate fermentation to lactate; (S)-lactate from pyruvate: step 1/1. This is L-lactate dehydrogenase B-A chain (ldhba) from Danio rerio (Zebrafish).